Here is a 347-residue protein sequence, read N- to C-terminus: Extracellular metalloprotease (347 aa).

The signal sequence occupies residues 1–20; that stretch reads MKSRPICSVIPPYILHRIIA. Positions 43 to 68 are disordered; that stretch reads SHHPRPEPHEKLPAGQANRSIHDAEQ. A Zn(2+)-binding site is contributed by His162. The active site involves Glu163. The Zn(2+) site is built by His166 and Glu186. Catalysis depends on His264, which acts as the Proton donor.

Belongs to the peptidase M4 family. The cofactor is Ca(2+). It depends on Zn(2+) as a cofactor.

It is found in the secreted. The sequence is that of Extracellular metalloprotease (prt1) from Pectobacterium carotovorum subsp. carotovorum (Erwinia carotovora subsp. carotovora).